The primary structure comprises 151 residues: Ribosome maturation factor RimP (151 aa).

Belongs to the RimP family.

The protein localises to the cytoplasm. In terms of biological role, required for maturation of 30S ribosomal subunits. In Photobacterium profundum (strain SS9), this protein is Ribosome maturation factor RimP.